A 567-amino-acid polypeptide reads, in one-letter code: Proline--tRNA ligase (567 aa).

This sequence belongs to the class-II aminoacyl-tRNA synthetase family. ProS type 1 subfamily. Homodimer.

It is found in the cytoplasm. The catalysed reaction is tRNA(Pro) + L-proline + ATP = L-prolyl-tRNA(Pro) + AMP + diphosphate. Functionally, catalyzes the attachment of proline to tRNA(Pro) in a two-step reaction: proline is first activated by ATP to form Pro-AMP and then transferred to the acceptor end of tRNA(Pro). As ProRS can inadvertently accommodate and process non-cognate amino acids such as alanine and cysteine, to avoid such errors it has two additional distinct editing activities against alanine. One activity is designated as 'pretransfer' editing and involves the tRNA(Pro)-independent hydrolysis of activated Ala-AMP. The other activity is designated 'posttransfer' editing and involves deacylation of mischarged Ala-tRNA(Pro). The misacylated Cys-tRNA(Pro) is not edited by ProRS. In Fusobacterium nucleatum subsp. nucleatum (strain ATCC 25586 / DSM 15643 / BCRC 10681 / CIP 101130 / JCM 8532 / KCTC 2640 / LMG 13131 / VPI 4355), this protein is Proline--tRNA ligase.